A 617-amino-acid polypeptide reads, in one-letter code: Membrane protein insertase YidC (617 aa).

A helical transmembrane segment spans residues 8–28 (MFVAIGLSLLVLLGWQYFVAG). Polar residues predominate over residues 36 to 49 (QIEAQNKAAQQQPP). The segment at 36-91 (QIEAQNKAAQQQPPGVTPDGVPSPSPKEGGPAAPAPGTLPTAQGGPVSREAALARS) is disordered. The span at 61–81 (PKEGGPAAPAPGTLPTAQGGP) shows a compositional bias: low complexity. 4 helical membrane passes run 387–407 (LFGNFGVSILVVTFCLKLLFL), 461–481 (WPVLIQIPVFFALYKVLFITI), 517–533 (FVHLGVWPIIMGITMFV), and 549–569 (IFTFMPIVFTFMLGSFPAGLV).

Belongs to the OXA1/ALB3/YidC family. Type 1 subfamily. As to quaternary structure, interacts with the Sec translocase complex via SecD. Specifically interacts with transmembrane segments of nascent integral membrane proteins during membrane integration.

Its subcellular location is the cell inner membrane. Its function is as follows. Required for the insertion and/or proper folding and/or complex formation of integral membrane proteins into the membrane. Involved in integration of membrane proteins that insert both dependently and independently of the Sec translocase complex, as well as at least some lipoproteins. Aids folding of multispanning membrane proteins. The sequence is that of Membrane protein insertase YidC from Methylobacterium radiotolerans (strain ATCC 27329 / DSM 1819 / JCM 2831 / NBRC 15690 / NCIMB 10815 / 0-1).